Here is a 144-residue protein sequence, read N- to C-terminus: Transcriptional regulator SlyA (144 aa).

The HTH marR-type domain occupies 2–135 (ESTLGSDLAR…LVGLIGKLEQ (134 aa)). The H-T-H motif DNA-binding region spans 49–72 (QIQLAKAIGIEQPSLVRTLDQLEE).

This sequence belongs to the SlyA family. Homodimer.

Functionally, transcription regulator that can specifically activate or repress expression of target genes. In Serratia proteamaculans (strain 568), this protein is Transcriptional regulator SlyA.